We begin with the raw amino-acid sequence, 204 residues long: Signal peptidase I (204 aa).

The Cytoplasmic portion of the chain corresponds to 1 to 10; it reads MNSFKNFLKE. A helical membrane pass occupies residues 11-30; that stretch reads WGLFLLILSLLALSRIFFWS. Topologically, residues 31-204 are extracellular; that stretch reads NVRVEGHSMD…LWPITRIGTF (174 aa). Catalysis depends on residues S38 and K76.

The protein belongs to the peptidase S26 family.

It is found in the cell membrane. It carries out the reaction Cleavage of hydrophobic, N-terminal signal or leader sequences from secreted and periplasmic proteins.. This chain is Signal peptidase I (lepB), found in Streptococcus pneumoniae serotype 4 (strain ATCC BAA-334 / TIGR4).